The sequence spans 1027 residues: Multidrug resistance protein MdtC (1027 aa).

Transmembrane regions (helical) follow at residues 16–36 (LLSL…PVAP), 333–353 (EVER…FLFL), 360–380 (LIPA…MYLC), 387–407 (LSLM…IVVL), 431–451 (VGFT…PLLL), 463–483 (FAIT…TLTP), 528–548 (WIMA…ISAP), 853–873 (LILI…LYES), 875–895 (IHPL…LLAL), 897–917 (LFDT…IGIV), 953–973 (PIIM…LSSG), and 984–1004 (ITIV…TPII).

This sequence belongs to the resistance-nodulation-cell division (RND) (TC 2.A.6) family. MdtC subfamily. In terms of assembly, part of a tripartite efflux system composed of MdtA, MdtB and MdtC. MdtC forms a heteromultimer with MdtB.

It is found in the cell inner membrane. This is Multidrug resistance protein MdtC from Proteus mirabilis (strain HI4320).